The sequence spans 218 residues: Glutathione S-transferase D7 (218 aa).

Residues 1 to 82 (MTPVLYYLPP…YLVSAYGKDE (82 aa)) enclose the GST N-terminal domain. Glutathione is bound by residues Ser-11, 52-54 (HCI), and 66-68 (ESR). The 120-residue stretch at 88–207 (DFRSRAIVDQ…KEINETGAET (120 aa)) folds into the GST C-terminal domain.

This sequence belongs to the GST superfamily. Theta family. As to quaternary structure, homodimer.

It catalyses the reaction RX + glutathione = an S-substituted glutathione + a halide anion + H(+). Its function is as follows. Conjugation of reduced glutathione to a wide number of exogenous and endogenous hydrophobic electrophiles. The protein is Glutathione S-transferase D7 of Anopheles gambiae (African malaria mosquito).